Reading from the N-terminus, the 73-residue chain is UPF0154 protein LJ_1506 (73 aa).

Residues 3-23 form a helical membrane-spanning segment; sequence LGLAIFLIIIALLIGLVGGFY.

The protein belongs to the UPF0154 family.

It is found in the cell membrane. This chain is UPF0154 protein LJ_1506, found in Lactobacillus johnsonii (strain CNCM I-12250 / La1 / NCC 533).